The primary structure comprises 763 residues: Putative pentatricopeptide repeat-containing protein At1g74580 (763 aa).

PPR repeat units lie at residues 39-69 (TLST…MREN), 75-109 (LEGV…DCEP), 110-144 (TVFS…GITP), 145-179 (DVYS…GCEM), 180-214 (NVVA…GVSL), 215-249 (CLST…GVLP), 250-284 (NLFT…GPKP), 285-319 (DVIT…GLEP), 320-354 (DSYT…GFVP), 355-389 (DQFT…GIKP), 390-424 (NVIL…GLIP), 425-459 (EVQT…GYFP), 460-494 (DIFT…GVDP), 495-529 (DVYT…GCAP), 530-564 (NLFT…SVNP), 565-595 (DAVT…MEEA), 601-635 (STPT…CLGP), 636-670 (DGYT…GFIP), and 671-705 (SLTT…GLVP).

It belongs to the PPR family. P subfamily.

The sequence is that of Putative pentatricopeptide repeat-containing protein At1g74580 from Arabidopsis thaliana (Mouse-ear cress).